We begin with the raw amino-acid sequence, 316 residues long: Acetyl-coenzyme A carboxylase carboxyl transferase subunit beta (316 aa).

Residues Leu39 to Met308 enclose the CoA carboxyltransferase N-terminal domain. Positions 43, 46, 62, and 65 each coordinate Zn(2+). The segment at Cys43–Cys65 adopts a C4-type zinc-finger fold.

The protein belongs to the AccD/PCCB family. In terms of assembly, acetyl-CoA carboxylase is a heterohexamer composed of biotin carboxyl carrier protein (AccB), biotin carboxylase (AccC) and two subunits each of ACCase subunit alpha (AccA) and ACCase subunit beta (AccD). Requires Zn(2+) as cofactor.

It localises to the cytoplasm. It catalyses the reaction N(6)-carboxybiotinyl-L-lysyl-[protein] + acetyl-CoA = N(6)-biotinyl-L-lysyl-[protein] + malonyl-CoA. Its pathway is lipid metabolism; malonyl-CoA biosynthesis; malonyl-CoA from acetyl-CoA: step 1/1. Functionally, component of the acetyl coenzyme A carboxylase (ACC) complex. Biotin carboxylase (BC) catalyzes the carboxylation of biotin on its carrier protein (BCCP) and then the CO(2) group is transferred by the transcarboxylase to acetyl-CoA to form malonyl-CoA. In Nostoc punctiforme (strain ATCC 29133 / PCC 73102), this protein is Acetyl-coenzyme A carboxylase carboxyl transferase subunit beta.